The sequence spans 113 residues: Colicin-E1 immunity protein (113 aa).

Its function is as follows. This protein is able to protect a cell, which harbors the plasmid ColE1 encoding colicin E1, against colicin E1. This is Colicin-E1 immunity protein (imm) from Escherichia coli.